Reading from the N-terminus, the 123-residue chain is Ferredoxin-5 (123 aa).

The 2Fe-2S ferredoxin-type domain maps to 2–119; that stretch reads PNITFTSPIM…DVMVHFTGTP (118 aa). Positions 42, 47, 50, and 102 each coordinate [2Fe-2S] cluster.

The protein belongs to the 2Fe2S plant-type ferredoxin family. Requires [2Fe-2S] cluster as cofactor.

Ferredoxins are iron-sulfur proteins that transfer electrons in a wide variety of metabolic reactions. This ferredoxin probably participates in nitrogen fixation. The chain is Ferredoxin-5 (fdxD) from Rhodobacter capsulatus (Rhodopseudomonas capsulata).